The primary structure comprises 854 residues: Golgin subfamily A member 6-like protein 22 (854 aa).

Disordered regions lie at residues 1 to 114, 320 to 348, 366 to 447, 481 to 568, 581 to 681, and 714 to 854; these read MLMW…HQEA, QEEKIREQEEKMRRQEEMMWEKEEKMRRQ, MHEQ…MWRQ, QEEK…MWRQ, RQEE…EQEE, and QEEK…MQEH. Residues 15 to 35 show a composition bias toward basic residues; that stretch reads LPTHPHLPTHPHLPTHPHLPT. Positions 45–66 are enriched in basic and acidic residues; it reads MSKETRQSKLAEAKEQLTDHHP. Polar residues-rich tracts occupy residues 67–77 and 85–97; these read QTNPSVGTAAS and NNGTSPETTTSGG. The span at 100 to 114 shows a compositional bias: basic and acidic residues; that stretch reads SPEDEQKASHQHQEA. Positions 103-854 form a coiled coil; it reads DEQKASHQHQ…RQQEEKMQEH (752 aa).

The protein belongs to the GOLGA6 family.

The polypeptide is Golgin subfamily A member 6-like protein 22 (Homo sapiens (Human)).